Here is a 152-residue protein sequence, read N- to C-terminus: 3-hydroxyacyl-[acyl-carrier-protein] dehydratase FabZ (152 aa).

The active site involves histidine 58.

This sequence belongs to the thioester dehydratase family. FabZ subfamily.

It localises to the cytoplasm. It carries out the reaction a (3R)-hydroxyacyl-[ACP] = a (2E)-enoyl-[ACP] + H2O. Its function is as follows. Involved in unsaturated fatty acids biosynthesis. Catalyzes the dehydration of short chain beta-hydroxyacyl-ACPs and long chain saturated and unsaturated beta-hydroxyacyl-ACPs. The polypeptide is 3-hydroxyacyl-[acyl-carrier-protein] dehydratase FabZ (Prochlorococcus marinus (strain AS9601)).